A 321-amino-acid chain; its full sequence is Peptide transport system permease protein SapB (321 aa).

8 helical membrane passes run 8–28 (HILWVALLLLVLSLLGFVILL), 41–61 (IYIGYFHYLGTLLQGDFGITY), 82–102 (CFITLFLAFIFGLPLGIISAV), 117–137 (YVGLSIPIFWLAPILLYVAAL), 150–170 (LLYEIKSITGFPVIDMWFMEV), 180–200 (ILQHLALPTLVLCILPTMEII), 249–269 (VFTLVLTQCMLVETALGWPGI), and 289–309 (VIVIGVCIILIDTFTKIFTFI). An ABC transmembrane type-1 domain is found at 75 to 303 (LPPTLELCFI…VCIILIDTFT (229 aa)).

Belongs to the binding-protein-dependent transport system permease family. OppBC subfamily.

It is found in the cell inner membrane. In terms of biological role, involved in a peptide intake transport system that plays a role in the resistance to antimicrobial peptides. The polypeptide is Peptide transport system permease protein SapB (sapB) (Haemophilus influenzae (strain ATCC 51907 / DSM 11121 / KW20 / Rd)).